Reading from the N-terminus, the 207-residue chain is MAKTYDYLFKLLLIGDSGVGKTCLLFRFSEDAFNTTFISTIGIDFKIRTIELDGKKIKLQIWDTAGQERFRTITTAYYRGAMGIMLVYDITNEKSFDNIKNWIRNIEEHASSDVERMILGNKCDMNDKRQVSKERGEKLAIDYGIKFLEASAKSSMNVEEAFFTLARDIMTKLNRKMNDSNSSGAGGPVKITENRSKKTSFFRCLLL.

Residues Ser-17, Gly-18, Val-19, Gly-20, Lys-21, Thr-22, Cys-23, Thr-35, Ser-39, and Thr-40 each coordinate GTP. Thr-22 is a Mg(2+) binding site. 2 consecutive short sequence motifs (switch) follow at residues 31–45 (DAFN…GIDF) and 63–80 (DTAG…YYRG). Residues Thr-40 and Asp-63 each contribute to the Mg(2+) site. Gly-66 contacts GTP. Thr-72 carries the post-translational modification Phosphothreonine. Asn-121, Lys-122, Asp-124, Ala-152, and Lys-153 together coordinate GTP. A phosphoserine mark is found at Ser-180 and Ser-183. Position 204 is a cysteine methyl ester (Cys-204). Cys-204 carries S-geranylgeranyl cysteine lipidation. A propeptide spans 205–207 (LLL) (removed in mature form).

This sequence belongs to the small GTPase superfamily. Rab family. In terms of assembly, associated with actin, delta-catenin and alpha and beta tubulins. Interacts with OTOF. Interacts with PEX5R. Interacts with RAB3IP. Interacts with VIM. Interacts with CDH1. Interacts with MICALL2. Interacts with GDI1, GDI2, CHML and CHM; phosphorylation at Thr-72 disrupts these interactions. Interacts with MICAL1. The cofactor is Mg(2+). Phosphorylation of Thr-72 in the switch II region by LRRK2 prevents the association of RAB regulatory proteins, including CHM, CHML and RAB GDP dissociation inhibitors GDI1 and GDI2.

The protein localises to the cell membrane. Its subcellular location is the cytoplasmic vesicle. It localises to the phagosome membrane. The protein resides in the endosome membrane. The catalysed reaction is GTP + H2O = GDP + phosphate + H(+). Its activity is regulated as follows. Regulated by guanine nucleotide exchange factors (GEFs) including RAB3IP/RABIN8 which promotes the exchange of bound GDP for free GTP. Regulated by GTPase activating proteins (GAPs) which increase the GTP hydrolysis activity. Inhibited by GDP dissociation inhibitors (GDIs). In terms of biological role, the small GTPases Rab are key regulators of intracellular membrane trafficking, from the formation of transport vesicles to their fusion with membranes. Rabs cycle between an inactive GDP-bound form and an active GTP-bound form that is able to recruit to membranes different sets of downstream effectors directly responsible for vesicle formation, movement, tethering and fusion. RAB8B may be involved in polarized vesicular trafficking and neurotransmitter release. May participate in cell junction dynamics in Sertoli cells. May also participate in the export of a subset of neosynthesized proteins through a Rab8-Rab10-Rab11-dependent endososomal export route. This chain is Ras-related protein Rab-8B (RAB8B), found in Bos taurus (Bovine).